A 309-amino-acid chain; its full sequence is Probable 4-hydroxy-2-oxoglutarate aldolase, mitochondrial (309 aa).

A substrate-binding site is contributed by 49–50; that stretch reads SN. The active-site Schiff-base intermediate with substrate is the Lys173.

This sequence belongs to the DapA family.

The catalysed reaction is (4S)-4-hydroxy-2-oxoglutarate = glyoxylate + pyruvate. The enzyme catalyses (4R)-4-hydroxy-2-oxoglutarate = glyoxylate + pyruvate. With respect to regulation, inhibited by divalent cations. Catalyzes the final step in the metabolic pathway of hydroxyproline. Involved in osmoadaptation. In Emericella nidulans (strain FGSC A4 / ATCC 38163 / CBS 112.46 / NRRL 194 / M139) (Aspergillus nidulans), this protein is Probable 4-hydroxy-2-oxoglutarate aldolase, mitochondrial.